Reading from the N-terminus, the 2035-residue chain is Ral GTPase-activating protein subunit alpha-1 (2035 aa).

The disordered stretch occupies residues 343–384; it reads LVSREESKNDTVDKADKTAEPEQSHSNTSTLTEREPSSSSLC. Positions 345 to 365 are enriched in basic and acidic residues; it reads SREESKNDTVDKADKTAEPEQ. Residues 366 to 384 are compositionally biased toward polar residues; it reads SHSNTSTLTEREPSSSSLC. Phosphoserine occurs at positions 710 and 720. Residues 714-754 form a disordered region; sequence SFSRGWSRDQPGQAPMRQRSATTTGSPGTEKARSIVRQKTV. Thr753 bears the Phosphothreonine mark. Position 772 is a phosphoserine (Ser772). Thr777 is modified (phosphothreonine). Position 796 is a phosphoserine (Ser796). The segment covering 807–817 has biased composition (basic and acidic residues); sequence ERAKVNKEDTS. 2 disordered regions span residues 807-834 and 848-911; these read ERAKVNKEDTSPKLPPLNSETGGSSANV and SGNA…SHSD. Composition is skewed to polar residues over residues 824 to 833 and 849 to 862; these read NSETGGSSAN and GNASTMTRRGSSPG. Ser859, Ser860, and Ser863 each carry phosphoserine. The segment covering 894–911 has biased composition (low complexity); that stretch reads SPASAGSSDLMSSDSHSD. 4 positions are modified to phosphoserine: Ser985, Ser989, Ser993, and Ser999. The interval 986–1008 is disordered; it reads ESASPVHSALGSRSQTPSPSTLN. Thr1001 carries the post-translational modification Phosphothreonine. Phosphoserine occurs at positions 1003 and 1477. Residues 1326–2034 are minimal domain that binds to TCF3/E12; sequence FTNKTVAHVA…PYHHFPADAD (709 aa). The stretch at 1713–1746 forms a coiled coil; that stretch reads SEKQENDVINAILKQYTEEKEFVEKHFNDLNMKA. One can recognise a Rap-GAP domain in the interval 1795 to 2003; sequence LRNLDSRQCR…EERARYLQTI (209 aa).

As to quaternary structure, component of the heterodimeric RalGAP1 complex with RALGAPB. Heterodimerization is required for activity. Interacts with the HLH region of TCF3/isoform E12. Highly expressed in brain, thymus and testis with lower levels in lung and spleen and barely detectable in heart or liver (at protein level).

The protein resides in the cytoplasm. The protein localises to the nucleus. Functionally, catalytic subunit of the heterodimeric RalGAP1 complex which acts as a GTPase activator for the Ras-like small GTPases RALA and RALB. This Rattus norvegicus (Rat) protein is Ral GTPase-activating protein subunit alpha-1 (Ralgapa1).